We begin with the raw amino-acid sequence, 217 residues long: ATP phosphoribosyltransferase (217 aa).

It belongs to the ATP phosphoribosyltransferase family. Short subfamily. Heteromultimer composed of HisG and HisZ subunits.

It is found in the cytoplasm. It carries out the reaction 1-(5-phospho-beta-D-ribosyl)-ATP + diphosphate = 5-phospho-alpha-D-ribose 1-diphosphate + ATP. It functions in the pathway amino-acid biosynthesis; L-histidine biosynthesis; L-histidine from 5-phospho-alpha-D-ribose 1-diphosphate: step 1/9. In terms of biological role, catalyzes the condensation of ATP and 5-phosphoribose 1-diphosphate to form N'-(5'-phosphoribosyl)-ATP (PR-ATP). Has a crucial role in the pathway because the rate of histidine biosynthesis seems to be controlled primarily by regulation of HisG enzymatic activity. This chain is ATP phosphoribosyltransferase, found in Burkholderia orbicola (strain MC0-3).